The sequence spans 386 residues: Phosphoglycerate kinase (386 aa).

Substrate-binding positions include 21-23 (DLN), arginine 36, 59-62 (HLGR), arginine 112, and arginine 145. Residues lysine 196, glutamate 313, and 339–342 (GGDT) contribute to the ATP site.

Belongs to the phosphoglycerate kinase family. As to quaternary structure, monomer.

It is found in the cytoplasm. It carries out the reaction (2R)-3-phosphoglycerate + ATP = (2R)-3-phospho-glyceroyl phosphate + ADP. It functions in the pathway carbohydrate degradation; glycolysis; pyruvate from D-glyceraldehyde 3-phosphate: step 2/5. In Haemophilus influenzae (strain PittGG), this protein is Phosphoglycerate kinase.